A 266-amino-acid polypeptide reads, in one-letter code: U2 small nuclear ribonucleoprotein A' (266 aa).

LRR repeat units lie at residues 30–51 (ILRN…NHLA), 53–74 (PTHI…HHRD), 75–95 (DIET…ALLP), and 97–118 (KLKS…IPLS). Positions 132–170 (NPICHLSEYRQRILALVPSLEVLDFKLVSQAEKAQAVKD) constitute an LRRCT domain.

Belongs to the U2 small nuclear ribonucleoprotein A family. Associated with the spliceosome.

The protein resides in the nucleus. In terms of biological role, involved in pre-mRNA splicing. The sequence is that of U2 small nuclear ribonucleoprotein A' (LEA1) from Candida glabrata (strain ATCC 2001 / BCRC 20586 / JCM 3761 / NBRC 0622 / NRRL Y-65 / CBS 138) (Yeast).